Consider the following 331-residue polypeptide: MECSESLELVDKFACGHILSRMFNVVMKHSICDLLEDGPKHYSEISKIIGFKDDSYCYRLMRYFVPRKLFKESVVQVGVFSKTPFSTEFSNNGTLKKLAKFHCNSFHYKLSQVLPETLEIGENQGPSSIGLSDYWEQIEKNEIYKNEFNDGMIGYTTHILKFLKGKIDLSKFETVVDIGGSHGYLIGSLLDRYPNVNGINFDTDMVINSSNEKYQHPRLKHVAGDFFKSVPEADCYLMKLILRCFSDEKCCELLKIISKSMKSNAKIIILDIILDSSKYLNFDTYLDILMMETLDGKQRSLSEWIKLFEMSGFKIDKYESGSPNYLIISKE.

Residues Gly179, Asp202, 224-226 (GDF), Asp225, Phe226, and Lys239 contribute to the S-adenosyl-L-methionine site.

Belongs to the class I-like SAM-binding methyltransferase superfamily. Cation-independent O-methyltransferase family. COMT subfamily.

In Dictyostelium discoideum (Social amoeba), this protein is Probable inactive O-methyltransferase 11 (omt11).